The chain runs to 116 residues: U3-theraphotoxin-Lsp1a (116 aa).

Residues 1-17 (MKLSTFIIMISLAVALA) form the signal peptide. The propeptide occupies 18–50 (TWPSEHIEGSDSETKLNVELGPYALADRAEKGK).

The protein belongs to the neurotoxin 25 family. F7 subfamily. Contains 3 disulfide bonds. As to expression, expressed by the venom gland.

The protein resides in the secreted. This is U3-theraphotoxin-Lsp1a from Lasiodora sp. (strain IBSP 8539) (Brazilian salmon pink birdeater).